The primary structure comprises 375 residues: Phosphoglycerate kinase (375 aa).

(2R)-3-phosphoglycerate contacts are provided by valine 1, aspartate 2, phenylalanine 3, asparagine 4, arginine 17, serine 40, histidine 41, glycine 43, arginine 44, leucine 99, arginine 100, histidine 147, and arginine 148. An ADP-binding site is contributed by glycine 191. Residue glycine 191 coordinates CDP. AMP-binding residues include alanine 192 and lysine 193. Alanine 192 is a binding site for ATP. Position 192 (alanine 192) interacts with Mg(2+). Aspartate 196 contacts CDP. Residue aspartate 196 participates in Mg(2+) binding. Residue lysine 197 coordinates AMP. Lysine 197 contributes to the ATP binding site. Glycine 215 contributes to the ADP binding site. Glycine 215 is a binding site for CDP. 2 residues coordinate AMP: glycine 216 and glycine 290. Glycine 216 and glycine 290 together coordinate ATP. Residues glycine 315 and phenylalanine 320 each contribute to the CDP site. ADP is bound at residue phenylalanine 320. Glutamate 321 lines the AMP pocket. Positions 321, 352, and 353 each coordinate ATP. Residue aspartate 352 participates in Mg(2+) binding.

It belongs to the phosphoglycerate kinase family. As to quaternary structure, monomer. Mg(2+) is required as a cofactor.

It catalyses the reaction (2R)-3-phosphoglycerate + ATP = (2R)-3-phospho-glyceroyl phosphate + ADP. The protein operates within carbohydrate degradation; glycolysis; pyruvate from D-glyceraldehyde 3-phosphate: step 2/5. The protein is Phosphoglycerate kinase (PGK) of Tetrahymena pyriformis.